The primary structure comprises 82 residues: Small ribosomal subunit protein bS16 (82 aa).

It belongs to the bacterial ribosomal protein bS16 family.

The chain is Small ribosomal subunit protein bS16 from Vibrio parahaemolyticus serotype O3:K6 (strain RIMD 2210633).